A 379-amino-acid chain; its full sequence is Serpin B5 (379 aa).

3 N-linked (GlcNAc...) asparagine glycosylation sites follow: Asn-133, Asn-176, and Asn-361.

It belongs to the serpin family. Ov-serpin subfamily.

The protein localises to the secreted. It localises to the extracellular space. Functionally, may not exhibit serine protease inhibitory activity. This chain is Serpin B5 (serpinb5), found in Xenopus tropicalis (Western clawed frog).